We begin with the raw amino-acid sequence, 518 residues long: Fusicoccin H C-9 hydroxylase (518 aa).

Residues 12-29 form a helical membrane-spanning segment; the sequence is HLLLISTVIAVLAALIVS. Asparagine 81 and asparagine 168 each carry an N-linked (GlcNAc...) asparagine glycan. Cysteine 456 lines the heme pocket.

Belongs to the cytochrome P450 family. Heme serves as cofactor.

It localises to the membrane. The protein operates within mycotoxin biosynthesis. In terms of biological role, cytochrome P450 monooxygenase; part of the 2 gene clusters that mediate the biosynthesis of fusicoccins, diterpene glucosides that display phytohormone-like activity and function as potent activators of plasma membrane H(+)-ATPases in plants by modifying 14-3-3 proteins and cause the plant disease constriction canker. The first step in the pathway is performed by the fusicoccadiene synthase PaFS that possesses both prenyl transferase and terpene cyclase activity, converting isopentenyl diphosphate and dimethylallyl diphosphate into geranylgeranyl diphosphate (GGDP) and successively converting GGDP into fusicocca-2,10(14)-diene, a precursor for fusicoccin H. The second step is the oxidation at the C-8 position by the cytochrome P450 monooxygenase PaP450-2 to yield fusicocca-2,10(14)-diene-8-beta-ol. The cytochrome P450 monooxygenase PaP450-1 then catalyzes the hydroxylation at the C-16 position to produce fusicocca-2,10(14)-diene-8-beta,16-diol. The dioxygenase fc-dox then catalyzes the 16-oxydation of fusicocca-2,10(14)-diene-8-beta,16-diol to yield an aldehyde (8-beta-hydroxyfusicocca-1,10(14)-dien-16-al). The short-chain dehydrogenase/reductase fc-sdr catalyzes the reduction of the aldehyde to yield fusicocca-1,10(14)-diene-8-beta,16-diol. The next step is the hydroxylation at C-9 performed by the cytochrome P450 monooxygenase PaP450-3 that leads to fusicoccin H aglycon which is glycosylated to fusicoccin H by the O-glycosyltransferase PaGT. Hydroxylation at C-12 by the cytochrome P450 monooxygenase PaP450-4 leads then to the production of fusicoccin Q and is followed by methylation by the O-methyltransferase PaMT to yield fusicoccin P. Fusicoccin P is further converted to fusicoccin J via prenylation by the O-glucose prenyltransferase PaPT. Cytochrome P450 monooxygenase PaP450-5 then performs hydroxylation at C-19 to yield dideacetyl-fusicoccin A which is acetylated to 3'-O-deacetyl-fusicoccin A by the O-acetyltransferase PaAT-2. Finally, a another acetylation by the O-acetyltransferase PaAT-1 yields fusicoccin A. The chain is Fusicoccin H C-9 hydroxylase from Phomopsis amygdali (Fusicoccum amygdali).